Here is a 150-residue protein sequence, read N- to C-terminus: Large ribosomal subunit protein bL9 (150 aa).

It belongs to the bacterial ribosomal protein bL9 family.

In terms of biological role, binds to the 23S rRNA. The sequence is that of Large ribosomal subunit protein bL9 from Streptococcus equi subsp. equi (strain 4047).